We begin with the raw amino-acid sequence, 386 residues long: D-galactosamine-6-phosphate deaminase AgaS (386 aa).

SIS domains are found at residues 59–217 and 222–366; these read LTPI…CIEM and LTER…PDNP.

It belongs to the SIS family. AgaS subfamily.

The protein localises to the cytoplasm. It carries out the reaction D-galactosamine 6-phosphate + H2O = D-tagatopyranose 1-phosphate + NH4(+). It catalyses the reaction alpha-D-glucosamine 6-phosphate + H2O = beta-D-fructose 6-phosphate + NH4(+). Its function is as follows. Involved in the pathway of N-acetyl-D-galactosamine degradation. Catalyzes the conversion of D-galactosamine 6-phosphate (GalN-6-P) to D-tagatofuranose 6-phosphate (Tag-6-P). It can also catalyze the conversion of D-glucosamine 6-phosphate. This chain is D-galactosamine-6-phosphate deaminase AgaS, found in Shewanella sp. (strain ANA-3).